A 277-amino-acid polypeptide reads, in one-letter code: Large ribosomal subunit protein uL2 (277 aa).

The disordered stretch occupies residues 222-277 (GSVMNPNDHPHGGGEGKSPVGHPGPLTPWGKPALGLKTRKNKKYSDKFIIKRKNKK).

Belongs to the universal ribosomal protein uL2 family. In terms of assembly, part of the 50S ribosomal subunit. Forms a bridge to the 30S subunit in the 70S ribosome.

Functionally, one of the primary rRNA binding proteins. Required for association of the 30S and 50S subunits to form the 70S ribosome, for tRNA binding and peptide bond formation. It has been suggested to have peptidyltransferase activity; this is somewhat controversial. Makes several contacts with the 16S rRNA in the 70S ribosome. The sequence is that of Large ribosomal subunit protein uL2 from Clostridium kluyveri (strain NBRC 12016).